Reading from the N-terminus, the 70-residue chain is Peptide Hp1035 (70 aa).

Residues 1 to 23 form the signal peptide; sequence MKTQFVILLVALVLFQMFAQSEA. Phe-36 is modified (phenylalanine amide). Positions 40 to 70 are excised as a propeptide; sequence GLQDLDMDDLDQLFDGEISQADINFLNQLMR.

This sequence belongs to the non-disulfide-bridged peptide (NDBP) superfamily. Short antimicrobial peptide (group 4) family. As to expression, expressed by the venom gland.

Its subcellular location is the secreted. The protein resides in the target cell membrane. In terms of biological role, amphipathic peptide with antimicrobial activity. The sequence is that of Peptide Hp1035 from Heterometrus petersii (Asian forest scorpion).